Reading from the N-terminus, the 262-residue chain is Tethering factor for nuclear proteasome cut8 (262 aa).

The protein belongs to the cut8/STS1 family. As to quaternary structure, binds the proteasome. Post-translationally, the N-terminal part (residues 1 to 72) is polyubiquitinated by rhp6, which is required for the interaction with the proteasome.

The protein resides in the nucleus envelope. In terms of biological role, together with nucleoporin alm1, tethers the proteasome to the nuclear envelope. Involved in ubiquitin-mediated protein degradation and facilitates the degradation of nuclear proteins like mitotic cyclin and cut2. Required for normal progression of anaphase. The sequence is that of Tethering factor for nuclear proteasome cut8 from Schizosaccharomyces pombe (strain 972 / ATCC 24843) (Fission yeast).